The sequence spans 277 residues: Cis-2,3-dihydrobiphenyl-2,3-diol dehydrogenase (277 aa).

NAD(+) is bound by residues 9 to 36 (LITG…AVLD) and Asp-59. Ser-142 is a substrate binding site. The active-site Proton acceptor is the Tyr-155. Lys-159 lines the NAD(+) pocket.

It belongs to the short-chain dehydrogenases/reductases (SDR) family.

The enzyme catalyses (2R,3S)-3-phenylcyclohexa-3,5-diene-1,2-diol + NAD(+) = biphenyl-2,3-diol + NADH + H(+). The protein operates within xenobiotic degradation; biphenyl degradation; 2-hydroxy-2,4-pentadienoate and benzoate from biphenyl: step 2/4. This is Cis-2,3-dihydrobiphenyl-2,3-diol dehydrogenase (bphB) from Paraburkholderia xenovorans (strain LB400).